The chain runs to 563 residues: Arginine--tRNA ligase (563 aa).

Residues 123–133 carry the 'HIGH' region motif; that stretch reads PNIAKDMHVGH.

The protein belongs to the class-I aminoacyl-tRNA synthetase family. Monomer.

The protein resides in the cytoplasm. It carries out the reaction tRNA(Arg) + L-arginine + ATP = L-arginyl-tRNA(Arg) + AMP + diphosphate. The protein is Arginine--tRNA ligase of Chlamydia trachomatis serovar A (strain ATCC VR-571B / DSM 19440 / HAR-13).